A 1073-amino-acid chain; its full sequence is Lon protease homolog, mitochondrial (1073 aa).

The N-terminal 27 residues, 1 to 27 (MIKASKCNKARALFLVRTSIPRTFIRN), are a transit peptide targeting the mitochondrion. Composition is skewed to basic and acidic residues over residues 69-107 (FDSKKEKQPSTDKSNDKDKPSRKEKGKDKEKENEERKDI) and 113-123 (YDIKEETDSKP). Positions 69–173 (FDSKKEKQPS…DKEFLSPSDA (105 aa)) are disordered. Over residues 132-150 (SSKSSISSSSGGANNNNNN) the composition is skewed to low complexity. Positions 158-167 (DDGSPKDKEF) are enriched in basic and acidic residues. Residues 177–395 (PPFLAIAMKD…LSLQLLQVEA (219 aa)) form the Lon N-terminal domain. Residue 543–550 (GPPGTGKT) participates in ATP binding. Positions 775-785 (SVISDKAKKDA) are enriched in basic and acidic residues. Residues 775 to 821 (SVISDKAKKDAGSSSIESNDSNTEAKVSTTTENEKKQEQKQKQDEEI) are disordered. The span at 790 to 805 (IESNDSNTEAKVSTTT) shows a compositional bias: polar residues. The segment covering 806-821 (ENEKKQEQKQKQDEEI) has biased composition (basic and acidic residues). Residues 856-1044 (TLNPGVATGL…SEVFEHLFKG (189 aa)) enclose the Lon proteolytic domain. Catalysis depends on residues Ser950 and Lys993.

Belongs to the peptidase S16 family. In terms of assembly, homohexamer or homoheptamer. Organized in a ring with a central cavity.

Its subcellular location is the mitochondrion matrix. The catalysed reaction is Hydrolysis of proteins in presence of ATP.. In terms of biological role, ATP-dependent serine protease that mediates the selective degradation of misfolded, unassembled or oxidatively damaged polypeptides as well as certain short-lived regulatory proteins in the mitochondrial matrix. May also have a chaperone function in the assembly of inner membrane protein complexes. Participates in the regulation of mitochondrial gene expression and in the maintenance of the integrity of the mitochondrial genome. Binds to mitochondrial DNA in a site-specific manner. The polypeptide is Lon protease homolog, mitochondrial (Candida dubliniensis (strain CD36 / ATCC MYA-646 / CBS 7987 / NCPF 3949 / NRRL Y-17841) (Yeast)).